A 219-amino-acid chain; its full sequence is Large ribosomal subunit protein mL67 (219 aa).

It belongs to the mitochondrion-specific ribosomal protein mL67 family.

The protein localises to the nucleus. The protein resides in the mitochondrion. Its function is as follows. Transcription factor involved in regulation of RNA polymerase II-dependent transcription. Also involved in regulation of mitochondrial DNA recombination, maintenance and repair, and generation of homoplasmic cells. The chain is Large ribosomal subunit protein mL67 (MHR1) from Kluyveromyces lactis (strain ATCC 8585 / CBS 2359 / DSM 70799 / NBRC 1267 / NRRL Y-1140 / WM37) (Yeast).